We begin with the raw amino-acid sequence, 151 residues long: 6,7-dimethyl-8-ribityllumazine synthase (151 aa).

5-amino-6-(D-ribitylamino)uracil contacts are provided by residues phenylalanine 15, 47 to 49 (TFE), and 71 to 73 (AVI). Residue 76-77 (ET) coordinates (2S)-2-hydroxy-3-oxobutyl phosphate. Histidine 79 (proton donor) is an active-site residue. Position 104 (leucine 104) interacts with 5-amino-6-(D-ribitylamino)uracil. (2S)-2-hydroxy-3-oxobutyl phosphate is bound at residue arginine 119.

Belongs to the DMRL synthase family.

It carries out the reaction (2S)-2-hydroxy-3-oxobutyl phosphate + 5-amino-6-(D-ribitylamino)uracil = 6,7-dimethyl-8-(1-D-ribityl)lumazine + phosphate + 2 H2O + H(+). The protein operates within cofactor biosynthesis; riboflavin biosynthesis; riboflavin from 2-hydroxy-3-oxobutyl phosphate and 5-amino-6-(D-ribitylamino)uracil: step 1/2. In terms of biological role, catalyzes the formation of 6,7-dimethyl-8-ribityllumazine by condensation of 5-amino-6-(D-ribitylamino)uracil with 3,4-dihydroxy-2-butanone 4-phosphate. This is the penultimate step in the biosynthesis of riboflavin. The polypeptide is 6,7-dimethyl-8-ribityllumazine synthase (Metallosphaera sedula (strain ATCC 51363 / DSM 5348 / JCM 9185 / NBRC 15509 / TH2)).